A 71-amino-acid chain; its full sequence is Small ribosomal subunit protein bS21 (71 aa).

Positions 43–71 (TERKRAKASAVKRHAKKLARENARRTRLY) are disordered. A compositionally biased stretch (basic residues) spans 46-59 (KRAKASAVKRHAKK). A compositionally biased stretch (basic and acidic residues) spans 60 to 71 (LARENARRTRLY).

The protein belongs to the bacterial ribosomal protein bS21 family.

The chain is Small ribosomal subunit protein bS21 from Edwardsiella ictaluri (strain 93-146).